A 197-amino-acid polypeptide reads, in one-letter code: 5'-deoxynucleotidase YpsIP31758_1449 (197 aa).

Residues 16–17 (RW) and histidine 31 each bind substrate. Residues 28-140 (VSEHSLQVAF…VKQADALCAY (113 aa)) enclose the HD domain. Histidine 31, histidine 66, and aspartate 67 together coordinate a divalent metal cation. Substrate-binding positions include aspartate 67, 75-78 (DLPT), and aspartate 135. Position 135 (aspartate 135) interacts with a divalent metal cation.

The protein belongs to the 5DNU family. As to quaternary structure, homodimer. It depends on a divalent metal cation as a cofactor.

It localises to the cytoplasm. It catalyses the reaction a 2'-deoxyribonucleoside 5'-phosphate + H2O = a 2'-deoxyribonucleoside + phosphate. Catalyzes the strictly specific dephosphorylation of 2'-deoxyribonucleoside 5'-monophosphates. This is 5'-deoxynucleotidase YpsIP31758_1449 from Yersinia pseudotuberculosis serotype O:1b (strain IP 31758).